A 499-amino-acid polypeptide reads, in one-letter code: Na(+)/H(+) antiporter NhaB (499 aa).

11 consecutive transmembrane segments (helical) span residues 33-53, 66-86, 89-109, 128-148, 237-257, 305-325, 326-346, 349-369, 393-413, 449-469, and 477-497; these read PVIF…EFIF, PGGL…HTVY, VSGN…IYFM, AILS…LDAL, FIEF…AGLI, AIVA…VGLI, GLTV…HQIG, FEEA…VGVI, MFFI…VATV, ATPN…APLI, and VWMA…MIVI.

This sequence belongs to the NhaB Na(+)/H(+) (TC 2.A.34) antiporter family.

Its subcellular location is the cell inner membrane. The enzyme catalyses 2 Na(+)(in) + 3 H(+)(out) = 2 Na(+)(out) + 3 H(+)(in). Functionally, na(+)/H(+) antiporter that extrudes sodium in exchange for external protons. This is Na(+)/H(+) antiporter NhaB from Hahella chejuensis (strain KCTC 2396).